The sequence spans 57 residues: Small ribosomal subunit protein bS21 (57 aa).

Residues 35 to 57 (RERYEKPSLRRKRKQEAARKRNR) form a disordered region.

It belongs to the bacterial ribosomal protein bS21 family.

This chain is Small ribosomal subunit protein bS21, found in Thermosynechococcus vestitus (strain NIES-2133 / IAM M-273 / BP-1).